Consider the following 397-residue polypeptide: Beta-lactamase (397 aa).

A signal peptide spans 1–26 (MRDTRFPCLCGIAASTLLFATTPAIA). Serine 90 acts as the Acyl-ester intermediate in catalysis. Positions 90, 146, 177, 179, and 370 each coordinate a beta-lactam. Residue tyrosine 177 is the Proton acceptor of the active site.

Belongs to the class-C beta-lactamase family. As to quaternary structure, monomer.

Its subcellular location is the periplasm. It catalyses the reaction a beta-lactam + H2O = a substituted beta-amino acid. Functionally, class C beta-lactamase which confers resistance to penicillins and cephalosporins. Has nitrocefin-hydrolyzing activity. In Pseudomonas aeruginosa (strain ATCC 15692 / DSM 22644 / CIP 104116 / JCM 14847 / LMG 12228 / 1C / PRS 101 / PAO1), this protein is Beta-lactamase (ampC).